Reading from the N-terminus, the 103-residue chain is MHESLRNWKLSPRYFGIAGDVIAEGTGLGKALNIPGKYILKPFPLLRLLSVTLFISSLVLLANPTGTLNIFSYSYVVMVVLFICAKSLFNYSLQFIGEETSSL.

Helical transmembrane passes span 42 to 62 and 65 to 85; these read PFPL…VLLA and TGTL…FICA.

It is found in the membrane. This is an uncharacterized protein from Saccharomyces cerevisiae (strain ATCC 204508 / S288c) (Baker's yeast).